We begin with the raw amino-acid sequence, 86 residues long: Acyl carrier protein (86 aa).

The Carrier domain occupies 10 to 85; it reads DKIEQKVIEM…DVIKYIKERQ (76 aa). S45 is subject to O-(pantetheine 4'-phosphoryl)serine.

Belongs to the acyl carrier protein (ACP) family. Post-translationally, 4'-phosphopantetheine is transferred from CoA to a specific serine of apo-ACP by AcpS. This modification is essential for activity because fatty acids are bound in thioester linkage to the sulfhydryl of the prosthetic group.

It is found in the cytoplasm. It participates in lipid metabolism; fatty acid biosynthesis. Carrier of the growing fatty acid chain in fatty acid biosynthesis. This is Acyl carrier protein from Rickettsia africae (strain ESF-5).